The chain runs to 238 residues: Adapter protein MecA (238 aa).

Positions glutamine 120–arginine 136 are enriched in basic and acidic residues. A disordered region spans residues glutamine 120 to threonine 139.

This sequence belongs to the MecA family. In terms of assembly, homodimer.

Functionally, enables the recognition and targeting of unfolded and aggregated proteins to the ClpC protease or to other proteins involved in proteolysis. This Staphylococcus saprophyticus subsp. saprophyticus (strain ATCC 15305 / DSM 20229 / NCIMB 8711 / NCTC 7292 / S-41) protein is Adapter protein MecA.